Here is a 106-residue protein sequence, read N- to C-terminus: uncharacterized protein (106 aa).

This is an uncharacterized protein from Escherichia coli O6:H1 (strain CFT073 / ATCC 700928 / UPEC).